Consider the following 688-residue polypeptide: Homoaconitase, mitochondrial (688 aa).

Cysteine 335, cysteine 395, and cysteine 398 together coordinate [4Fe-4S] cluster. A disordered region spans residues 468-494; it reads SIDLPKSSGNTGATSEEPISEDDTSEA.

This sequence belongs to the aconitase/IPM isomerase family. [4Fe-4S] cluster is required as a cofactor.

The protein resides in the mitochondrion. It carries out the reaction (2R,3S)-homoisocitrate = cis-homoaconitate + H2O. It functions in the pathway amino-acid biosynthesis; L-lysine biosynthesis via AAA pathway; L-alpha-aminoadipate from 2-oxoglutarate: step 3/5. Its function is as follows. Catalyzes the reversible hydration of cis-homoaconitate to (2R,3S)-homoisocitrate, a step in the alpha-aminoadipate pathway for lysine biosynthesis. This chain is Homoaconitase, mitochondrial (LYS4), found in Candida parapsilosis (Yeast).